Reading from the N-terminus, the 257-residue chain is 1-(5-phosphoribosyl)-5-[(5-phosphoribosylamino)methylideneamino] imidazole-4-carboxamide isomerase (257 aa).

Aspartate 8 (proton acceptor) is an active-site residue. The active-site Proton donor is aspartate 129.

It belongs to the HisA/HisF family.

The protein localises to the cytoplasm. The enzyme catalyses 1-(5-phospho-beta-D-ribosyl)-5-[(5-phospho-beta-D-ribosylamino)methylideneamino]imidazole-4-carboxamide = 5-[(5-phospho-1-deoxy-D-ribulos-1-ylimino)methylamino]-1-(5-phospho-beta-D-ribosyl)imidazole-4-carboxamide. It functions in the pathway amino-acid biosynthesis; L-histidine biosynthesis; L-histidine from 5-phospho-alpha-D-ribose 1-diphosphate: step 4/9. This Nostoc punctiforme (strain ATCC 29133 / PCC 73102) protein is 1-(5-phosphoribosyl)-5-[(5-phosphoribosylamino)methylideneamino] imidazole-4-carboxamide isomerase.